A 194-amino-acid polypeptide reads, in one-letter code: Glycerol-3-phosphate acyltransferase (194 aa).

Helical transmembrane passes span 7 to 27, 59 to 79, 86 to 106, 116 to 136, and 157 to 177; these read LLMATSIAYLLGSIMGAYWVC, LTLFWDAAKGAAAVCIAAMLG, GVTAVAAIVGHMLPAFHHFKG, AGLALAWQTTLALTLVWAAVV, and AWRLNPEHLALFLILSLFILI.

Belongs to the PlsY family. Probably interacts with PlsX.

It localises to the cell inner membrane. The catalysed reaction is an acyl phosphate + sn-glycerol 3-phosphate = a 1-acyl-sn-glycero-3-phosphate + phosphate. It participates in lipid metabolism; phospholipid metabolism. Catalyzes the transfer of an acyl group from acyl-phosphate (acyl-PO(4)) to glycerol-3-phosphate (G3P) to form lysophosphatidic acid (LPA). This enzyme utilizes acyl-phosphate as fatty acyl donor, but not acyl-CoA or acyl-ACP. The protein is Glycerol-3-phosphate acyltransferase of Hahella chejuensis (strain KCTC 2396).